Consider the following 130-residue polypeptide: Protein ApaG (130 aa).

In terms of domain architecture, ApaG spans 3 to 127; sequence RAITRNIQVT…FSLDVPDVRR (125 aa).

The chain is Protein ApaG from Xanthobacter autotrophicus (strain ATCC BAA-1158 / Py2).